The sequence spans 226 residues: Urease accessory protein UreE (226 aa).

The tract at residues 192–226 (PHGSGLHIHSIHSHGDGHSHDHDHSHGDHDSDHKH) is disordered. Residues 204–226 (SHGDGHSHDHDHSHGDHDSDHKH) show a composition bias toward basic and acidic residues.

This sequence belongs to the UreE family.

Its subcellular location is the cytoplasm. Functionally, involved in urease metallocenter assembly. Binds nickel. Probably functions as a nickel donor during metallocenter assembly. The polypeptide is Urease accessory protein UreE (Yersinia intermedia).